The following is a 127-amino-acid chain: UPF0325 protein ASA_3165 (127 aa).

The protein belongs to the UPF0325 family.

The protein is UPF0325 protein ASA_3165 of Aeromonas salmonicida (strain A449).